We begin with the raw amino-acid sequence, 120 residues long: Sirohydrochlorin cobaltochelatase (120 aa).

His9 serves as the catalytic Proton acceptor. Co(2+) is bound at residue His9. Substrate is bound by residues Gln43 and 68-73; that span reads FAAGTH. Co(2+) is bound at residue His73.

Belongs to the CbiX family. CbiXS subfamily. Homotetramer; dimer of dimers.

It carries out the reaction Co-sirohydrochlorin + 2 H(+) = sirohydrochlorin + Co(2+). Its pathway is cofactor biosynthesis; adenosylcobalamin biosynthesis; cob(II)yrinate a,c-diamide from sirohydrochlorin (anaerobic route): step 1/10. In terms of biological role, catalyzes the insertion of Co(2+) into sirohydrochlorin as part of the anaerobic pathway to cobalamin biosynthesis. In Sulfurisphaera tokodaii (strain DSM 16993 / JCM 10545 / NBRC 100140 / 7) (Sulfolobus tokodaii), this protein is Sirohydrochlorin cobaltochelatase.